Consider the following 477-residue polypeptide: Cysteine--tRNA ligase (477 aa).

Cysteine 29 contacts Zn(2+). The short motif at 31–41 (PTVYDYPHLGH) is the 'HIGH' region element. The Zn(2+) site is built by cysteine 209, histidine 234, and glutamate 238. The 'KMSKS' region motif lies at 266–270 (KMSKS). Lysine 269 contacts ATP.

It belongs to the class-I aminoacyl-tRNA synthetase family. It depends on Zn(2+) as a cofactor.

The protein localises to the cytoplasm. It catalyses the reaction tRNA(Cys) + L-cysteine + ATP = L-cysteinyl-tRNA(Cys) + AMP + diphosphate. This chain is Cysteine--tRNA ligase (cysS), found in Pyrococcus abyssi (strain GE5 / Orsay).